Consider the following 364-residue polypeptide: tRNA-specific 2-thiouridylase MnmA (364 aa).

Residues 13–20 and Met-39 contribute to the ATP site; that span reads GMSGGVDS. An interaction with target base in tRNA region spans residues 99 to 101; that stretch reads NPD. Cys-104 serves as the catalytic Nucleophile. Cys-104 and Cys-199 form a disulfide bridge. An ATP-binding site is contributed by Gly-128. The interaction with tRNA stretch occupies residues 149 to 151; sequence KDQ. The active-site Cysteine persulfide intermediate is the Cys-199. An interaction with tRNA region spans residues 311–312; that stretch reads RY.

This sequence belongs to the MnmA/TRMU family.

It is found in the cytoplasm. The catalysed reaction is S-sulfanyl-L-cysteinyl-[protein] + uridine(34) in tRNA + AH2 + ATP = 2-thiouridine(34) in tRNA + L-cysteinyl-[protein] + A + AMP + diphosphate + H(+). Functionally, catalyzes the 2-thiolation of uridine at the wobble position (U34) of tRNA, leading to the formation of s(2)U34. This chain is tRNA-specific 2-thiouridylase MnmA, found in Alcanivorax borkumensis (strain ATCC 700651 / DSM 11573 / NCIMB 13689 / SK2).